The following is a 480-amino-acid chain: UDP-N-acetylmuramate--L-alanine ligase (480 aa).

An ATP-binding site is contributed by 122-128 (GTHGKTT).

The protein belongs to the MurCDEF family.

It is found in the cytoplasm. It catalyses the reaction UDP-N-acetyl-alpha-D-muramate + L-alanine + ATP = UDP-N-acetyl-alpha-D-muramoyl-L-alanine + ADP + phosphate + H(+). It participates in cell wall biogenesis; peptidoglycan biosynthesis. Its function is as follows. Cell wall formation. The sequence is that of UDP-N-acetylmuramate--L-alanine ligase from Pseudomonas paraeruginosa (strain DSM 24068 / PA7) (Pseudomonas aeruginosa (strain PA7)).